We begin with the raw amino-acid sequence, 362 residues long: Adenosine deaminase (362 aa).

Zn(2+) is bound by residues His19 and His21. His21, Asp23, and Gly181 together coordinate substrate. Position 208 (His208) interacts with Zn(2+). Residue Glu211 is the Proton donor of the active site. A Zn(2+)-binding site is contributed by Asp300.

Belongs to the metallo-dependent hydrolases superfamily. Adenosine and AMP deaminases family. Adenosine deaminase subfamily. Requires Zn(2+) as cofactor.

It catalyses the reaction adenosine + H2O + H(+) = inosine + NH4(+). The enzyme catalyses 2'-deoxyadenosine + H2O + H(+) = 2'-deoxyinosine + NH4(+). Its function is as follows. Catalyzes the hydrolytic deamination of adenosine and 2-deoxyadenosine. The chain is Adenosine deaminase from Mycobacterium ulcerans (strain Agy99).